Here is a 205-residue protein sequence, read N- to C-terminus: Urease accessory protein UreG (205 aa).

10-17 contributes to the GTP binding site; it reads GPVGAGKT.

The protein belongs to the SIMIBI class G3E GTPase family. UreG subfamily. In terms of assembly, homodimer. UreD, UreF and UreG form a complex that acts as a GTP-hydrolysis-dependent molecular chaperone, activating the urease apoprotein by helping to assemble the nickel containing metallocenter of UreC. The UreE protein probably delivers the nickel.

It localises to the cytoplasm. Its function is as follows. Facilitates the functional incorporation of the urease nickel metallocenter. This process requires GTP hydrolysis, probably effectuated by UreG. The protein is Urease accessory protein UreG of Corynebacterium glutamicum (strain ATCC 13032 / DSM 20300 / JCM 1318 / BCRC 11384 / CCUG 27702 / LMG 3730 / NBRC 12168 / NCIMB 10025 / NRRL B-2784 / 534).